A 353-amino-acid chain; its full sequence is Methylthioribose-1-phosphate isomerase (353 aa).

The active-site Proton donor is the aspartate 241.

It belongs to the eIF-2B alpha/beta/delta subunits family. MtnA subfamily.

It localises to the cytoplasm. The protein localises to the nucleus. The enzyme catalyses 5-(methylsulfanyl)-alpha-D-ribose 1-phosphate = 5-(methylsulfanyl)-D-ribulose 1-phosphate. The protein operates within amino-acid biosynthesis; L-methionine biosynthesis via salvage pathway; L-methionine from S-methyl-5-thio-alpha-D-ribose 1-phosphate: step 1/6. Catalyzes the interconversion of methylthioribose-1-phosphate (MTR-1-P) into methylthioribulose-1-phosphate (MTRu-1-P). The protein is Methylthioribose-1-phosphate isomerase (mri1) of Danio rerio (Zebrafish).